Here is a 320-residue protein sequence, read N- to C-terminus: ATP-dependent 6-phosphofructokinase (320 aa).

An ATP-binding site is contributed by Gly12. Residues 22-26 and 55-60 contribute to the ADP site; these read RGVVR and RYSVSD. Residues 73 to 74 and 103 to 106 contribute to the ATP site; these read RF and GDGS. Position 104 (Asp104) interacts with Mg(2+). A substrate-binding site is contributed by 126 to 128; sequence TID. Asp128 serves as the catalytic Proton acceptor. An ADP-binding site is contributed by Arg155. Residues Arg163 and 170–172 each bind substrate; that span reads MGR. ADP-binding positions include 186 to 188, Lys212, and 214 to 216; these read GCE and KKH. Substrate is bound by residues Glu223, Arg244, and 250-253; that span reads HIQR.

It belongs to the phosphofructokinase type A (PFKA) family. ATP-dependent PFK group I subfamily. Prokaryotic clade 'B1' sub-subfamily. In terms of assembly, homotetramer. The cofactor is Mg(2+).

It is found in the cytoplasm. It catalyses the reaction beta-D-fructose 6-phosphate + ATP = beta-D-fructose 1,6-bisphosphate + ADP + H(+). It participates in carbohydrate degradation; glycolysis; D-glyceraldehyde 3-phosphate and glycerone phosphate from D-glucose: step 3/4. Its activity is regulated as follows. Allosterically activated by ADP and other diphosphonucleosides, and allosterically inhibited by phosphoenolpyruvate. Catalyzes the phosphorylation of D-fructose 6-phosphate to fructose 1,6-bisphosphate by ATP, the first committing step of glycolysis. This chain is ATP-dependent 6-phosphofructokinase, found in Citrobacter koseri (strain ATCC BAA-895 / CDC 4225-83 / SGSC4696).